The following is a 164-amino-acid chain: Large ribosomal subunit protein uL10 (164 aa).

It belongs to the universal ribosomal protein uL10 family. In terms of assembly, part of the ribosomal stalk of the 50S ribosomal subunit. The N-terminus interacts with L11 and the large rRNA to form the base of the stalk. The C-terminus forms an elongated spine to which L12 dimers bind in a sequential fashion forming a multimeric L10(L12)X complex.

Functionally, forms part of the ribosomal stalk, playing a central role in the interaction of the ribosome with GTP-bound translation factors. This chain is Large ribosomal subunit protein uL10, found in Chromobacterium violaceum (strain ATCC 12472 / DSM 30191 / JCM 1249 / CCUG 213 / NBRC 12614 / NCIMB 9131 / NCTC 9757 / MK).